The sequence spans 263 residues: L-histidine 2-aminobutanoyltransferase (263 aa).

It belongs to the methyltransferase superfamily. CntL family. Interacts with CntM.

It catalyses the reaction L-histidine + S-adenosyl-L-methionine = (2S)-2-amino-4-{[(1S)-1-carboxy-2-(1H-imidazol-4-yl)ethyl]amino}butanoate + S-methyl-5'-thioadenosine + H(+). Its function is as follows. Catalyzes the nucleophilic attack of one alpha-aminobutanoate moiety from SAM onto L-histidine to produce the intermediate (2S)-2-amino-4-{[(1S)-1-carboxy-2-(1H-imidazol-4-yl)ethyl]amino}butanoate. Functions in the biosynthesis of the metallophore pseudopaline, which is involved in the acquisition of nickel and zinc, and thus enables bacterial growth inside the host, where metal access is limited. Therefore, this enzyme probably contributes to Pseudomonas virulence. Cannot use D-histidine in place of L-histidine as substrate. This chain is L-histidine 2-aminobutanoyltransferase, found in Pseudomonas aeruginosa (strain UCBPP-PA14).